Here is a 177-residue protein sequence, read N- to C-terminus: Large ribosomal subunit protein uL6 (177 aa).

Belongs to the universal ribosomal protein uL6 family. As to quaternary structure, part of the 50S ribosomal subunit.

Functionally, this protein binds to the 23S rRNA, and is important in its secondary structure. It is located near the subunit interface in the base of the L7/L12 stalk, and near the tRNA binding site of the peptidyltransferase center. This is Large ribosomal subunit protein uL6 from Methylobacterium nodulans (strain LMG 21967 / CNCM I-2342 / ORS 2060).